The primary structure comprises 407 residues: Arylacetamide deacetylase-like 3 (407 aa).

The Involved in the stabilization of the negatively charged intermediate by the formation of the oxyanion hole motif lies at 119-121 (HGG). Catalysis depends on residues S193, D347, and H377.

The protein belongs to the 'GDXG' lipolytic enzyme family.

The polypeptide is Arylacetamide deacetylase-like 3 (AADACL3) (Homo sapiens (Human)).